Consider the following 86-residue polypeptide: Small ribosomal subunit protein bS20 (86 aa).

Belongs to the bacterial ribosomal protein bS20 family.

Its function is as follows. Binds directly to 16S ribosomal RNA. In Bifidobacterium longum (strain DJO10A), this protein is Small ribosomal subunit protein bS20.